Reading from the N-terminus, the 76-residue chain is Zinc finger protein 706 (76 aa).

Residues 1-13 (MARGQQKIQSQQK) are compositionally biased toward low complexity. Disordered stretches follow at residues 1-32 (MARG…QKAA) and 53-76 (TFKQ…DVQA). Composition is skewed to basic and acidic residues over residues 17–31 (KQAE…DQKA) and 53–62 (TFKQHFESKH). The C2H2-type zinc-finger motif lies at 39–62 (YTCTVCRTQMPDPKTFKQHFESKH).

Its subcellular location is the cytoplasm. The protein localises to the nucleus. Transcription repressor involved in the exit of embryonic stem cells (ESCs) from self-renewal. The polypeptide is Zinc finger protein 706 (Gallus gallus (Chicken)).